Here is a 501-residue protein sequence, read N- to C-terminus: Raftlin-2 (501 aa).

Disordered regions lie at residues Met1 to Phe20 and Ser196 to Gly238. A lipid anchor (N-myristoyl glycine) is attached at Gly2. The S-palmitoyl cysteine moiety is linked to residue Cys3. Residues Met224 to Ser233 show a composition bias toward polar residues. Residue Ser405 is modified to Phosphoserine. Positions Ala407–Pro454 are disordered. Thr409 is subject to Phosphothreonine. A compositionally biased stretch (basic and acidic residues) spans Thr410–Lys425. A compositionally biased stretch (polar residues) spans Thr427–Pro440. Ser430 is subject to Phosphoserine. Over residues Glu442–Arg451 the composition is skewed to basic and acidic residues.

This sequence belongs to the raftlin family.

It localises to the cell membrane. In terms of biological role, upon bacterial lipopolysaccharide stimulation, mediates clathrin-dependent internalization of TLR4 in dendritic cells, resulting in activation of TICAM1-mediated signaling and subsequent IFNB1 production. May regulate B-cell antigen receptor mediated-signaling. This Pongo abelii (Sumatran orangutan) protein is Raftlin-2 (RFTN2).